The primary structure comprises 383 residues: MHC class I polypeptide-related sequence A (383 aa).

A signal peptide spans 1 to 23; that stretch reads MGLGPVFLLLAGIFPFAPPGAAA. Residues 24 to 307 are Extracellular-facing; sequence EPHSLRYNLT…GKVLVLQSHW (284 aa). An N-linked (GlcNAc...) asparagine glycan is attached at Asn-31. Cysteines 59 and 64 form a disulfide. N-linked (GlcNAc...) asparagine glycosylation occurs at Asn-79. Residues Cys-119 and Cys-187 are joined by a disulfide bond. The Ig-like C1-type domain occupies 207–296; it reads PMVNVTRSEA…SGNHSTHPVP (90 aa). Asn-210, Asn-220, and Asn-261 each carry an N-linked (GlcNAc...) asparagine glycan. Cys-225 and Cys-282 are joined by a disulfide. The chain crosses the membrane as a helical span at residues 308 to 328; that stretch reads QTFHVSAVAAAAIFVIIIFYV. Topologically, residues 329–383 are cytoplasmic; the sequence is RCCKKKTSAAEGPELVSLQVLDQHPVGTSDHRDATQLGFQPLMSDLGSTGSTEGA. Residues Cys-330 and Cys-331 are each lipidated (S-palmitoyl cysteine).

The protein belongs to the MHC class I family. MIC subfamily. As to quaternary structure, unlike classical MHC class I molecules, does not form a heterodimer with beta-2-microglobulin. Binds as a monomer to a KLRK1/NKG2D homodimer. KLRK1 forms a complex with HCST/DAP10 in which KLRK1 binds MICA while HCST acts as an adapter molecule which enables signal transduction. Interacts with PDIA6 on the surface of tumor cells, leading to disulfide bond reduction which is required for release of MICA from tumor cells. (Microbial infection) Interacts with human cytomegalovirus/HHV-5 protein UL142. Post-translationally, N-glycosylated. Glycosylation is not essential for interaction with KLRK1/NKG2D but enhances complex formation. In terms of processing, proteolytically cleaved and released from the cell surface of tumor cells which impairs KLRK1/NKG2D expression and T-cell activation. Palmitoylated on cysteine residues in the cytoplasmic tail leading to its association with membrane microdomains enriched in cholesterol. Post-translationally, N-glycosylation is necessary for cell surface expression. In terms of processing, (Microbial infection) Ubiquitinated by human herpesvirus 8 protein K5, leading to degradation. As to expression, widely expressed with the exception of the central nervous system where it is absent. Expressed predominantly in gastric epithelium and also in monocytes, keratinocytes, endothelial cells, fibroblasts and in the outer layer of Hassal's corpuscles within the medulla of normal thymus. In skin, expressed mainly in the keratin layers, basal cells, ducts and follicles. Also expressed in many, but not all, epithelial tumors of lung, breast, kidney, ovary, prostate and colon. In thyomas, overexpressed in cortical and medullar epithelial cells. Tumors expressing MICA display increased levels of gamma delta T-cells.

The protein resides in the cell membrane. It localises to the cytoplasm. In terms of biological role, widely expressed membrane-bound protein which acts as a ligand to stimulate an activating receptor KLRK1/NKG2D, expressed on the surface of essentially all human natural killer (NK), gammadelta T and CD8 alphabeta T-cells. Up-regulated in stressed conditions, such as viral and bacterial infections or DNA damage response, serves as signal of cellular stress, and engagement of KLRK1/NKG2D by MICA triggers NK-cells resulting in a range of immune effector functions, such as cytotoxicity and cytokine production. The sequence is that of MHC class I polypeptide-related sequence A from Homo sapiens (Human).